The sequence spans 599 residues: Putative sensor histidine kinase NtrY-like (599 aa).

4 consecutive transmembrane segments (helical) span residues 17–37 (ILIL…FYVI), 44–64 (FSTI…LGIL), 85–105 (IVIA…VFSV), and 285–305 (IMFI…GVLF). Positions 307-361 (AQIVKPIKKLVTATDKVKDGDLTVQVPENEVDKDEIGTLYVAFNRMIKQLSRQQR) constitute an HAMP domain. The region spanning 378 to 589 (KVAHEIKNPL…IIDIKFDLKE (212 aa)) is the Histidine kinase domain. At histidine 381 the chain carries Phosphohistidine; by autocatalysis.

It localises to the cell membrane. The enzyme catalyses ATP + protein L-histidine = ADP + protein N-phospho-L-histidine.. In terms of biological role, member of the two-component regulatory system RT0603/RT0550. The protein is Putative sensor histidine kinase NtrY-like of Rickettsia typhi (strain ATCC VR-144 / Wilmington).